We begin with the raw amino-acid sequence, 274 residues long: S-methyl-5'-thioadenosine phosphorylase (274 aa).

Residues Ser20, 62 to 63 (RH), and 95 to 96 (SA) each bind phosphate. Position 194 (Met194) interacts with substrate. Residue Thr195 coordinates phosphate. 218-220 (DYD) is a substrate binding site.

It belongs to the PNP/MTAP phosphorylase family. MTAP subfamily. In terms of assembly, homohexamer. Dimer of a homotrimer.

The catalysed reaction is S-methyl-5'-thioadenosine + phosphate = 5-(methylsulfanyl)-alpha-D-ribose 1-phosphate + adenine. Its pathway is amino-acid biosynthesis; L-methionine biosynthesis via salvage pathway; S-methyl-5-thio-alpha-D-ribose 1-phosphate from S-methyl-5'-thioadenosine (phosphorylase route): step 1/1. Catalyzes the reversible phosphorylation of S-methyl-5'-thioadenosine (MTA) to adenine and 5-methylthioribose-1-phosphate. Involved in the breakdown of MTA, a major by-product of polyamine biosynthesis. Responsible for the first step in the methionine salvage pathway after MTA has been generated from S-adenosylmethionine. Has broad substrate specificity with 6-aminopurine nucleosides as preferred substrates. This Hyperthermus butylicus (strain DSM 5456 / JCM 9403 / PLM1-5) protein is S-methyl-5'-thioadenosine phosphorylase.